We begin with the raw amino-acid sequence, 267 residues long: Phosphatidylglycerol--prolipoprotein diacylglyceryl transferase (267 aa).

4 helical membrane passes run 10–30, 54–74, 90–110, and 116–136; these read VAIA…VVGF, LLFY…ALFY, WDGG…AWLF, and LAFF…LGAG. Position 137 (Arg-137) interacts with a 1,2-diacyl-sn-glycero-3-phospho-(1'-sn-glycerol). The next 3 membrane-spanning stretches (helical) occupy residues 169 to 189, 197 to 217, and 231 to 251; these read PSPL…LWWV, GMIS…VEFV, and WLTM…ALCV.

This sequence belongs to the Lgt family.

Its subcellular location is the cell inner membrane. It catalyses the reaction L-cysteinyl-[prolipoprotein] + a 1,2-diacyl-sn-glycero-3-phospho-(1'-sn-glycerol) = an S-1,2-diacyl-sn-glyceryl-L-cysteinyl-[prolipoprotein] + sn-glycerol 1-phosphate + H(+). Its pathway is protein modification; lipoprotein biosynthesis (diacylglyceryl transfer). Its function is as follows. Catalyzes the transfer of the diacylglyceryl group from phosphatidylglycerol to the sulfhydryl group of the N-terminal cysteine of a prolipoprotein, the first step in the formation of mature lipoproteins. In Chromohalobacter salexigens (strain ATCC BAA-138 / DSM 3043 / CIP 106854 / NCIMB 13768 / 1H11), this protein is Phosphatidylglycerol--prolipoprotein diacylglyceryl transferase.